A 149-amino-acid polypeptide reads, in one-letter code: CCAAT/enhancer-binding protein gamma (149 aa).

The span at 1–12 (MSKVSQQNSTPG) shows a compositional bias: polar residues. The segment at 1–92 (MSKVSQQNST…SKQKAQDTLQ (92 aa)) is disordered. Residue Lys3 forms a Glycyl lysine isopeptide (Lys-Gly) (interchain with G-Cter in SUMO2) linkage. The segment covering 28-37 (LQQVPQLVPA) has biased composition (low complexity). The segment covering 56–72 (SPMDRNSDEYRQRRERN) has biased composition (basic and acidic residues). One can recognise a bZIP domain in the interval 62 to 125 (SDEYRQRRER…SVLKDLFLEH (64 aa)). Positions 66–93 (RQRRERNNMAVKKSRLKSKQKAQDTLQR) are basic motif. Positions 97–118 (LKEENERLEAKIKLLTKELSVL) are leucine-zipper. The disordered stretch occupies residues 128-149 (NLADNVQPSSTENTTNPDKAGQ). The span at 131–149 (DNVQPSSTENTTNPDKAGQ) shows a compositional bias: polar residues.

Belongs to the bZIP family. C/EBP subfamily. Binds DNA as a dimer and can form stable heterodimers with CEBPA and CEBPB. Interacts with ZNF638; this interaction increases transcriptional activation.

The protein resides in the nucleus. Functionally, transcription factor that binds to the promoter and the enhancer regions of target genes. Binds to the enhancer element PRE-I (positive regulatory element-I) of the IL-4 gene. Binds to the promoter and the enhancer of the immunoglobulin heavy chain. Binds to GPE1, a cis-acting element in the G-CSF gene promoter. This is CCAAT/enhancer-binding protein gamma (CEBPG) from Bos taurus (Bovine).